The following is a 217-amino-acid chain: Urease accessory protein UreF (217 aa).

It belongs to the UreF family. As to quaternary structure, ureD, UreF and UreG form a complex that acts as a GTP-hydrolysis-dependent molecular chaperone, activating the urease apoprotein by helping to assemble the nickel containing metallocenter of UreC. The UreE protein probably delivers the nickel.

The protein resides in the cytoplasm. Functionally, required for maturation of urease via the functional incorporation of the urease nickel metallocenter. The protein is Urease accessory protein UreF of Ruegeria pomeroyi (strain ATCC 700808 / DSM 15171 / DSS-3) (Silicibacter pomeroyi).